The following is a 935-amino-acid chain: Progesterone receptor (935 aa).

Positions 1 to 49 are disordered; that stretch reads MTELKAKGXRAPHVAGSPSSPKVXSPLPCRQAAXPFPGSQTSDTLPEVS. Residues 1–164 form an AF3; mediates transcriptional activation region; the sequence is MTELKAKGXR…SATQRVLSRL (164 aa). Residues 1 to 568 form a modulating, Pro-Rich region; sequence MTELKAKGXR…YSFESLPQKI (568 aa). The span at 17-28 shows a compositional bias: low complexity; sequence SPSSPKVXSPLP. Residue Ser-20 is modified to Phosphoserine. Positions 55-59 match the LXXL motif 1 motif; the sequence is LDGLL. The interval 61 to 255 is disordered; it reads PRICQGQDPP…GAAAGGGAAA (195 aa). Ser-81 is modified (phosphoserine). Positions 115–119 match the LXXL motif 2 motif; the sequence is LDTLW. Phosphoserine is present on residues Ser-130 and Ser-162. The mediates transcriptional transrepression stretch occupies residues 165-305; it reads MSRSGGKAGD…LATTVTDFIH (141 aa). A Nuclear localization signal motif is present at residues 183-187; the sequence is KVLPR. The residue at position 190 (Ser-190) is a Phosphoserine. A compositionally biased stretch (polar residues) spans 191-203; that stretch reads PSRQLLLPTTGSP. Ser-213 carries the phosphoserine modification. Residues 220–231 are compositionally biased toward acidic residues; that stretch reads EVEEEDGSESED. Positions 232-246 are enriched in low complexity; the sequence is SAGPLLKGKPRALGG. Ser-294 is subject to Phosphoserine; by MAPK1. The segment at 331–365 is disordered; sequence GGAGAASAFAPPRSSPSASSTPVPGGDFPDCAYAP. A compositionally biased stretch (low complexity) spans 335–356; it reads AASAFAPPRSSPSASSTPVPGG. Ser-345 carries the phosphoserine; by MAPK modification. Lys-388 participates in a covalent cross-link: Glycyl lysine isopeptide (Lys-Gly) (interchain with G-Cter in SUMO); alternate. Lys-388 participates in a covalent cross-link: Glycyl lysine isopeptide (Lys-Gly) (interchain with G-Cter in ubiquitin); alternate. Ser-400 bears the Phosphoserine; by CDK2 mark. The segment at 415–452 is disordered; the sequence is PDFPLGPPPPLPPRAPPSRPGEAAVTAAPASASVSSAS. Over residues 418–433 the composition is skewed to pro residues; sequence PLGPPPPLPPRAPPSR. Over residues 434-452 the composition is skewed to low complexity; it reads PGEAAVTAAPASASVSSAS. The AF1; mediates transcriptional activation stretch occupies residues 456–548; the sequence is STLECILYKA…VYPPYLNYLR (93 aa). Residue Lys-533 forms a Glycyl lysine isopeptide (Lys-Gly) (interchain with G-Cter in SUMO) linkage. 2 NR C4-type zinc fingers span residues 569 to 589 and 605 to 629; these read CLICGDEASGCHYGVLTCGSC and CAGRNDCIVDKIRRKNCPACRLRKC. The segment at residues 569–641 is a DNA-binding region (nuclear receptor); sequence CLICGDEASG…AGMVLGGRKF (73 aa). Phosphoserine is present on Ser-678. An NR LBD domain is found at 681 to 915; it reads QDIQLIPPLI…EFPEMMSEVI (235 aa). The tract at residues 689-935 is AF2; mediates transcriptional activation; it reads LINLLLSIEP…MVKPLLFHKK (247 aa).

It belongs to the nuclear hormone receptor family. In terms of assembly, interacts with SMARD1 and UNC45A. Interacts with CUEDC2; the interaction promotes ubiquitination, decreases sumoylation, and represses transcriptional activity. Interacts with PIAS3; the interaction promotes sumoylation of PR in a hormone-dependent manner, inhibits DNA-binding, and alters nuclear export. Interacts with SP1; the interaction requires ligand-induced phosphorylation on Ser-345 by ERK1/2-MAPK. Interacts with PRMT2. Interacts with NCOA2 and NCOA1. Interacts with KLF9. Interacts with GTF2B. In terms of processing, phosphorylated on multiple serine sites. Several of these sites are hormone-dependent. Phosphorylation on Ser-294 is highly hormone-dependent and modulates ubiquitination and sumoylation on Lys-388. Phosphorylation on Ser-345 also requires induction by hormone. Basal phosphorylation on Ser-81, Ser-162, Ser-190 and Ser-400 is increased in response to progesterone and can be phosphorylated in vitro by the CDK2-A1 complex. Increased levels of phosphorylation on Ser-400 also in the presence of EGF, heregulin, IGF, PMA and FBS. Phosphorylation at this site by CDK2 is ligand-independent, and increases nuclear translocation and transcriptional activity. Phosphorylation at Ser-162 and Ser-294, but not at Ser-190, is impaired during the G(2)/M phase of the cell cycle. Phosphorylation on Ser-345 by ERK1/2 MAPK is required for interaction with SP1. Sumoylation is hormone-dependent and represses transcriptional activity. Sumoylation on all three sites is enhanced by PIAS3. Desumoylated by SENP1. Sumoylation on Lys-388, the main site of sumoylation, is repressed by ubiquitination on the same site, and modulated by phosphorylation at Ser-294. Post-translationally, ubiquitination is hormone-dependent and represses sumoylation on the same site. Promoted by MAPK-mediated phosphorylation on Ser-294. In terms of processing, palmitoylated by ZDHHC7 and ZDHHC21. Palmitoylation is required for plasma membrane targeting and for rapid intracellular signaling via ERK and AKT kinases and cAMP generation.

It is found in the nucleus. Its subcellular location is the cytoplasm. Its function is as follows. The steroid hormones and their receptors are involved in the regulation of eukaryotic gene expression and affect cellular proliferation and differentiation in target tissues. Transcriptional activator of several progesteron-dependent promoters in a variety of cell types. Involved in activation of SRC-dependent MAPK signaling on hormone stimulation. This is Progesterone receptor (PGR) from Ateles paniscus (Black spider monkey).